The sequence spans 260 residues: MYIEKIRKVKPLIHHITNYVTVNDCANASIAIGASPIMADFIQEQEEFSKICNCLVLNTGTINERVANSMYESAKFYGNLNKAIVLDPVALGVSMARDAINLKLLNSYKISIIKANASEIASVIGLDGKAKGTDNTFVVNDHFLDKACEYAKGHNRILVVSGEVDFIISSEKIAKIYNGSIMATKITGAGCMCASMCGVFAGVIEDKFQASLQAMLSFDIACEMAEEISNGSGSFRVNLIDALSNLNDEDVKKRAKYEII.

Met38 contacts substrate. Residues Lys114 and Ser161 each contribute to the ATP site. Substrate is bound at residue Gly188.

It belongs to the Thz kinase family. Mg(2+) serves as cofactor.

The enzyme catalyses 5-(2-hydroxyethyl)-4-methylthiazole + ATP = 4-methyl-5-(2-phosphooxyethyl)-thiazole + ADP + H(+). The protein operates within cofactor biosynthesis; thiamine diphosphate biosynthesis; 4-methyl-5-(2-phosphoethyl)-thiazole from 5-(2-hydroxyethyl)-4-methylthiazole: step 1/1. In terms of biological role, catalyzes the phosphorylation of the hydroxyl group of 4-methyl-5-beta-hydroxyethylthiazole (THZ). In Campylobacter lari (strain RM2100 / D67 / ATCC BAA-1060), this protein is Hydroxyethylthiazole kinase.